The sequence spans 192 residues: UPF0462 protein C4orf33 homolog (192 aa).

It belongs to the UPF0462 family.

This Mus musculus (Mouse) protein is UPF0462 protein C4orf33 homolog (D3Ertd751e).